Here is a 324-residue protein sequence, read N- to C-terminus: Phospho-N-acetylmuramoyl-pentapeptide-transferase (324 aa).

10 consecutive transmembrane segments (helical) span residues T9–V29, T53–I73, V77–L97, F117–A137, I147–S167, L176–F196, M201–N221, I227–L247, L253–F273, and V304–F324.

It belongs to the glycosyltransferase 4 family. MraY subfamily. Requires Mg(2+) as cofactor.

It is found in the cell membrane. The enzyme catalyses UDP-N-acetyl-alpha-D-muramoyl-L-alanyl-gamma-D-glutamyl-meso-2,6-diaminopimeloyl-D-alanyl-D-alanine + di-trans,octa-cis-undecaprenyl phosphate = di-trans,octa-cis-undecaprenyl diphospho-N-acetyl-alpha-D-muramoyl-L-alanyl-D-glutamyl-meso-2,6-diaminopimeloyl-D-alanyl-D-alanine + UMP. Its pathway is cell wall biogenesis; peptidoglycan biosynthesis. Its function is as follows. Catalyzes the initial step of the lipid cycle reactions in the biosynthesis of the cell wall peptidoglycan: transfers peptidoglycan precursor phospho-MurNAc-pentapeptide from UDP-MurNAc-pentapeptide onto the lipid carrier undecaprenyl phosphate, yielding undecaprenyl-pyrophosphoryl-MurNAc-pentapeptide, known as lipid I. This is Phospho-N-acetylmuramoyl-pentapeptide-transferase from Listeria monocytogenes serotype 4b (strain CLIP80459).